Consider the following 339-residue polypeptide: N-acetyl-gamma-glutamyl-phosphate reductase 1 (339 aa).

Cys149 is an active-site residue.

The protein belongs to the NAGSA dehydrogenase family. Type 1 subfamily.

The protein resides in the cytoplasm. It catalyses the reaction N-acetyl-L-glutamate 5-semialdehyde + phosphate + NADP(+) = N-acetyl-L-glutamyl 5-phosphate + NADPH + H(+). It functions in the pathway amino-acid biosynthesis; L-arginine biosynthesis; N(2)-acetyl-L-ornithine from L-glutamate: step 3/4. In terms of biological role, catalyzes the NADPH-dependent reduction of N-acetyl-5-glutamyl phosphate to yield N-acetyl-L-glutamate 5-semialdehyde. This is N-acetyl-gamma-glutamyl-phosphate reductase 1 from Lactiplantibacillus plantarum (strain ATCC BAA-793 / NCIMB 8826 / WCFS1) (Lactobacillus plantarum).